Here is a 916-residue protein sequence, read N- to C-terminus: Cadherin-4 (916 aa).

Residues 1 to 20 form the signal peptide; sequence MTAGAGVLLLLLSLSGALRA. A propeptide spanning residues 21–169 is cleaved from the precursor; sequence HNEDLTTRET…NANGLRRRKR (149 aa). The interval 124 to 168 is disordered; the sequence is TSSPHSGHKPQKGKKVVALDPSPPPKDTLLPWPQHQNANGLRRRK. The segment covering 129 to 138 has biased composition (basic residues); the sequence is SGHKPQKGKK. 5 consecutive Cadherin domains span residues 170-277, 278-392, 393-507, 508-613, and 614-724; these read DWVI…RPEF, INQV…PPEF, TAST…APYF, PSNH…DNAP, and ELLP…TIGA. Residues 170 to 734 are Extracellular-facing; sequence DWVIPPINVP…VAAAGLGTGA (565 aa). N-linked (GlcNAc...) asparagine glycosylation is found at asparagine 283, asparagine 412, asparagine 557, asparagine 632, asparagine 661, and asparagine 702. The chain crosses the membrane as a helical span at residues 735–756; it reads IVAILICILILLTMVLLFVMWM. Over 757–916 the chain is Cytoplasmic; the sequence is KRREKERHTK…ADMYGGGEED (160 aa). Positions 806–838 are disordered; sequence MGHVPSKAPGVRRVDERPVGAEPQYPIRPMVPH.

Expressed mainly in brain but also found in other tissues.

It is found in the cell membrane. Its function is as follows. Cadherins are calcium-dependent cell adhesion proteins. They preferentially interact with themselves in a homophilic manner in connecting cells; cadherins may thus contribute to the sorting of heterogeneous cell types. May play an important role in retinal development. This is Cadherin-4 (CDH4) from Homo sapiens (Human).